Consider the following 274-residue polypeptide: Triosephosphate isomerase (274 aa).

Residue 31-33 (NWK) coordinates substrate. Catalysis depends on H118, which acts as the Electrophile. E188 acts as the Proton acceptor in catalysis. Residues G194, S234, and 255 to 256 (GG) contribute to the substrate site.

The protein belongs to the triosephosphate isomerase family. In terms of assembly, homodimer.

It localises to the cytoplasm. The enzyme catalyses D-glyceraldehyde 3-phosphate = dihydroxyacetone phosphate. Its pathway is carbohydrate biosynthesis; gluconeogenesis. It participates in carbohydrate degradation; glycolysis; D-glyceraldehyde 3-phosphate from glycerone phosphate: step 1/1. Involved in the gluconeogenesis. Catalyzes stereospecifically the conversion of dihydroxyacetone phosphate (DHAP) to D-glyceraldehyde-3-phosphate (G3P). The polypeptide is Triosephosphate isomerase (Chlamydia trachomatis serovar L2 (strain ATCC VR-902B / DSM 19102 / 434/Bu)).